The primary structure comprises 221 residues: UPF0502 protein Sputw3181_2381 (221 aa).

It belongs to the UPF0502 family.

This Shewanella sp. (strain W3-18-1) protein is UPF0502 protein Sputw3181_2381.